The following is a 335-amino-acid chain: Erlin-2 (335 aa).

Topologically, residues 1–2 (MS) are cytoplasmic. Residues 3–23 (HAGAIAAIGVALIAAALFSAI) traverse the membrane as a helical segment. The Lumenal portion of the chain corresponds to 24–335 (HKIEEGHVGV…ALNEPAVGDE (312 aa)). A glycan (N-linked (GlcNAc...) asparagine) is linked at asparagine 106. The segment covering 310 to 321 (AGPSVQSATLLQ) has biased composition (polar residues). The disordered stretch occupies residues 310-335 (AGPSVQSATLLQDDSPALNEPAVGDE).

The protein belongs to the band 7/mec-2 family.

The protein resides in the endoplasmic reticulum membrane. In terms of biological role, mediates the endoplasmic reticulum-associated degradation (ERAD) of inositol 1,4,5-trisphosphate receptors (IP3Rs). Promotes sterol-accelerated ERAD of HMGCR. Involved in regulation of cellular cholesterol homeostasis by regulation the SREBP signaling pathway. The chain is Erlin-2 (erlin2) from Xenopus tropicalis (Western clawed frog).